The following is a 429-amino-acid chain: Adenylosuccinate synthetase (429 aa).

Residues 12-18 and 40-42 each bind GTP; these read GDEGKGK and GHT. Residue D13 is the Proton acceptor of the active site. Residues D13 and G40 each contribute to the Mg(2+) site. IMP-binding positions include 13–16, 38–41, T129, R143, Q223, T238, and R302; these read DEGK and NAGH. Catalysis depends on H41, which acts as the Proton donor. 298–304 provides a ligand contact to substrate; that stretch reads TVTGRRR. Residues R304, 330–332, and 412–414 each bind GTP; these read KLD and STS.

This sequence belongs to the adenylosuccinate synthetase family. In terms of assembly, homodimer. The cofactor is Mg(2+).

It localises to the cytoplasm. The catalysed reaction is IMP + L-aspartate + GTP = N(6)-(1,2-dicarboxyethyl)-AMP + GDP + phosphate + 2 H(+). It participates in purine metabolism; AMP biosynthesis via de novo pathway; AMP from IMP: step 1/2. Plays an important role in the de novo pathway of purine nucleotide biosynthesis. Catalyzes the first committed step in the biosynthesis of AMP from IMP. This Granulibacter bethesdensis (strain ATCC BAA-1260 / CGDNIH1) protein is Adenylosuccinate synthetase.